The primary structure comprises 705 residues: MNSLFASTARGLEELLKNELEGLGAESCQIVQGGVHYQVSDRLMYQSLMWSRLASRILLPLTECAVYSDLDLYLGVQAIDWPAMFSSDKTFAVHFSGLNEVIRNSQYGALKVKDAIVDSFTRKNLPRPNVDREQPDIRVNVWLNKDTASIALDLSGEGLHQRGYRQQTGQAPLKENLAAAIVLRSGWQSGTPLVDPMCGSGTLLIEAAMIASDRAPGLQRKHWGFTGWSKFDPSLWSDVTREAHERARQGIAQTSSRFFGYDNDARVIDRARINARNAGLAELIGFTTQDVLKLTNPLAQGPVGTVLSNPPYGERLDSEPALIALHGQLGRIMKTHFGGWNLSLFSASPELLSCLQLRAERQFKAKNGPLDCVQKNYQLAENPTGAPAGQLAEDYANRLRKNVKKLDKWARQEGIQCYRVYDADLPDYNVAVDRYGDWVVIQEYAAPKTIDPAKARQRLFDVISATLSVLDLPANKLVLKTREKQKGKSQYQKLGEKGDFFEVAEYNAKLWVNLTDYLDTGVFLDHRIARKMLGQMSKGKDFLNLFAYTGSASVHAGLGGARTTTTIDMSRTYLEWAERNMRLNGLSGRQHRLMQADCLSWLRDADEQFDLIFIDPPTFSNSKRMDESFDVQRDHLDLMKDLKRLLRKNGTVMFSNNKRGFKMDFAGMEALGLVANEITTKTQSQDFARNRQIHNCWLITHAGKE.

The 112-residue stretch at 43 to 154 (LMYQSLMWSR…KDTASIALDL (112 aa)) folds into the THUMP domain.

Belongs to the methyltransferase superfamily. RlmKL family.

It is found in the cytoplasm. The enzyme catalyses guanosine(2445) in 23S rRNA + S-adenosyl-L-methionine = N(2)-methylguanosine(2445) in 23S rRNA + S-adenosyl-L-homocysteine + H(+). It catalyses the reaction guanosine(2069) in 23S rRNA + S-adenosyl-L-methionine = N(2)-methylguanosine(2069) in 23S rRNA + S-adenosyl-L-homocysteine + H(+). In terms of biological role, specifically methylates the guanine in position 2445 (m2G2445) and the guanine in position 2069 (m7G2069) of 23S rRNA. This Erwinia tasmaniensis (strain DSM 17950 / CFBP 7177 / CIP 109463 / NCPPB 4357 / Et1/99) protein is Ribosomal RNA large subunit methyltransferase K/L.